We begin with the raw amino-acid sequence, 856 residues long: MTKKAKRNIVHKRFDSIVKGSQDTKKYRGLELTNGLRVLLVSDSKTRVSAVALDVKVGHLMDPWELPGLAHFCEHMLFLGTAKYPSEREYFKYLAANNGDSNAYTDTDHTNYSFEVRSEKLYGALDRFAQFFLDPQFTESATEREVCAVNCEYLDKVNEDFWRCLQVERSLSKPGHDYSKFAIGNKKTLLEDPRTKGIEPRDVLLDFYKNWYSSDIMTCCIVGKESLDVLESYLGSFKFDAIKNTRKERKIWKDSPFGPDQLAKRIEIVPIQNTGQVSIKFPFPDLNGEFLSQPGDYIAHLIGHEGPGSLLSELKRLGWVISLEADNHTIASGFGVFSVTMDLSTEGLEHVDDVIQLVFNFIGFLKSSGPQKWIHDELAELNAVDFRFDDVKHTMEKASILAECLHPKIRKNFETALKTSHHAFNLPEKNEYIPSKFDQKPREPVKSGYPRLISEDEWIQVWFKQDNEYNSPKQGIMFALTTPLVAKKSKNVVAFKSLDTIIEETYNARLAGLECQFESSSSGVQIRVFGYDEKQSLFAKHLVNRMANFQVNRLCFDISFESLKRTLTNHAFSQPHDLSAHFIDLLVVDNIWSKEQLLAVCDSVTLEDVHGFAIKMLQAFHMELFVHGNSTEKDTLQLSKELSDILKSVAPNSRPLKRDEHNPHRELQLINGHEHVYRHFQKTHDVGCVEVAFQIGVQSTYNNSVNKLLNELIKNPAYTILRTNEALGYNVSTESRLNDGNVYLHVIVQGPESADHVLERIEVFLESAREEIVAMPQEDFDYQVWAMFKENPPTLSQCFSMFWSEIHSRQYNFGRNKEVRGISKRITKEEVINFFDRKIRKGGAERRKLALGLWKK.

Histidine 71 contributes to the Zn(2+) binding site. The active-site Proton acceptor is the glutamate 74. Positions 75 and 152 each coordinate Zn(2+).

It belongs to the peptidase M16 family.

This chain is Putative zinc protease C28F5.4, found in Caenorhabditis elegans.